Here is a 189-residue protein sequence, read N- to C-terminus: Elongation factor P (189 aa).

Lys34 is subject to N6-(3,6-diaminohexanoyl)-5-hydroxylysine.

It belongs to the elongation factor P family. Post-translationally, may be beta-lysylated on the epsilon-amino group of Lys-34 by the combined action of EpmA and EpmB, and then hydroxylated on the C5 position of the same residue by EpmC (if this protein is present). Lysylation is critical for the stimulatory effect of EF-P on peptide-bond formation. The lysylation moiety may extend toward the peptidyltransferase center and stabilize the terminal 3-CCA end of the tRNA. Hydroxylation of the C5 position on Lys-34 may allow additional potential stabilizing hydrogen-bond interactions with the P-tRNA.

The protein resides in the cytoplasm. It participates in protein biosynthesis; polypeptide chain elongation. Its function is as follows. Involved in peptide bond synthesis. Alleviates ribosome stalling that occurs when 3 or more consecutive Pro residues or the sequence PPG is present in a protein, possibly by augmenting the peptidyl transferase activity of the ribosome. Modification of Lys-34 is required for alleviation. The chain is Elongation factor P from Idiomarina loihiensis (strain ATCC BAA-735 / DSM 15497 / L2-TR).